The sequence spans 337 residues: uncharacterized protein (337 aa).

2 consecutive transmembrane segments (helical) span residues 4-24 (FIFF…FSLI) and 26-46 (LLLW…LFAL).

Belongs to the plectrovirus ORF2 family.

Its subcellular location is the host membrane. This is an uncharacterized protein from Spiroplasma melliferum (SpV1).